The primary structure comprises 219 residues: Large ribosomal subunit protein uL1 (219 aa).

The protein belongs to the universal ribosomal protein uL1 family. As to quaternary structure, part of the 50S ribosomal subunit.

Its function is as follows. Binds directly to 23S rRNA. Probably involved in E site tRNA release. Functionally, protein L1 is also a translational repressor protein, it controls the translation of its operon by binding to its mRNA. The sequence is that of Large ribosomal subunit protein uL1 from Pyrococcus horikoshii (strain ATCC 700860 / DSM 12428 / JCM 9974 / NBRC 100139 / OT-3).